Consider the following 249-residue polypeptide: Microvitellogenin (249 aa).

An N-terminal signal peptide occupies residues 1 to 17; that stretch reads MLRTTVVLLTLAAIAFA.

Functionally, small vitellogenic protein found in females. It is synthesized in the fat body, secreted into the hemolymph, and taken up by developing oocytes. This Manduca sexta (Tobacco hawkmoth) protein is Microvitellogenin (MVG).